A 178-amino-acid polypeptide reads, in one-letter code: MEHKLEDIIAIFNQCFEEEYNTRLVKGGDEPIYLPANDEVPYNAIYFARGFYSSALHEIAHWLVAGKERRKLEDFGYWYEPDGRSEERQRDFEKVEVKPQALEWILATAAGFRYFASADNLNGNPGDTQPFKQAVYEQVKIYAEKGLPKRAETLRKALVAFYSTEDDINLAKFDVTCI.

It belongs to the EpmC family.

It carries out the reaction N(6)-((3R)-3,6-diaminohexanoyl)-L-lysyl-[protein] + NADPH + O2 + H(+) = N(6)-((3R)-3,6-diaminohexanoyl)-5-hydroxy-L-lysyl-[protein] + NADP(+) + H2O. Its function is as follows. Is involved in the final hydroxylation step of the post-translational modification of translation elongation factor P (EF-P) on 'Lys-34'. Acts after beta-lysylation of 'Lys-34' by EpmA and EpmB. EpmC adds an oxygen atom to the C5 position of 'Lys-34' and does not modify the added beta-lysine. The chain is Elongation factor P lysine hydroxylase (epmC) from Haemophilus influenzae (strain ATCC 51907 / DSM 11121 / KW20 / Rd).